Consider the following 341-residue polypeptide: Ketol-acid reductoisomerase (NADP(+)) (341 aa).

The KARI N-terminal Rossmann domain occupies 1–182 (MTEMFYDDDA…GGTRAGVIKT (182 aa)). NADP(+) contacts are provided by residues 25–28 (YGSQ), Lys-48, Ser-51, Ser-53, and 83–86 (DQHQ). Residue His-108 is part of the active site. Gly-134 contributes to the NADP(+) binding site. The region spanning 183 to 328 (TFTEETETDL…RELRGLFSWQ (146 aa)) is the KARI C-terminal knotted domain. 4 residues coordinate Mg(2+): Asp-191, Glu-195, Glu-227, and Glu-231. Residue Ser-252 coordinates substrate.

Belongs to the ketol-acid reductoisomerase family. The cofactor is Mg(2+).

It catalyses the reaction (2R)-2,3-dihydroxy-3-methylbutanoate + NADP(+) = (2S)-2-acetolactate + NADPH + H(+). The catalysed reaction is (2R,3R)-2,3-dihydroxy-3-methylpentanoate + NADP(+) = (S)-2-ethyl-2-hydroxy-3-oxobutanoate + NADPH + H(+). It functions in the pathway amino-acid biosynthesis; L-isoleucine biosynthesis; L-isoleucine from 2-oxobutanoate: step 2/4. Its pathway is amino-acid biosynthesis; L-valine biosynthesis; L-valine from pyruvate: step 2/4. Involved in the biosynthesis of branched-chain amino acids (BCAA). Catalyzes an alkyl-migration followed by a ketol-acid reduction of (S)-2-acetolactate (S2AL) to yield (R)-2,3-dihydroxy-isovalerate. In the isomerase reaction, S2AL is rearranged via a Mg-dependent methyl migration to produce 3-hydroxy-3-methyl-2-ketobutyrate (HMKB). In the reductase reaction, this 2-ketoacid undergoes a metal-dependent reduction by NADPH to yield (R)-2,3-dihydroxy-isovalerate. This is Ketol-acid reductoisomerase (NADP(+)) from Arthrobacter sp. (strain FB24).